Reading from the N-terminus, the 131-residue chain is Glycine cleavage system H protein (131 aa).

A Lipoyl-binding domain is found at 24–106; sequence TVRIGITDYA…YGEGWLVDLE (83 aa). An N6-lipoyllysine modification is found at Lys65.

This sequence belongs to the GcvH family. The glycine cleavage system is composed of four proteins: P, T, L and H. (R)-lipoate is required as a cofactor.

In terms of biological role, the glycine cleavage system catalyzes the degradation of glycine. The H protein shuttles the methylamine group of glycine from the P protein to the T protein. This Mycobacteroides abscessus (strain ATCC 19977 / DSM 44196 / CCUG 20993 / CIP 104536 / JCM 13569 / NCTC 13031 / TMC 1543 / L948) (Mycobacterium abscessus) protein is Glycine cleavage system H protein.